We begin with the raw amino-acid sequence, 134 residues long: Arsenate reductase (134 aa).

Residues C11, C83, and C90 each act as nucleophile in the active site. 2 disulfide bridges follow: C11/C83 and C83/C90.

The protein belongs to the low molecular weight phosphotyrosine protein phosphatase family. Thioredoxin-coupled ArsC subfamily.

Its subcellular location is the cytoplasm. The catalysed reaction is arsenate + [thioredoxin]-dithiol + H(+) = arsenite + [thioredoxin]-disulfide + H2O. Catalyzes the reduction of arsenate [As(V)] to arsenite [As(III)]. The polypeptide is Arsenate reductase (Bacillus anthracis (strain A0248)).